A 505-amino-acid chain; its full sequence is Maturase K (505 aa).

The protein belongs to the intron maturase 2 family. MatK subfamily.

It is found in the plastid. The protein localises to the chloroplast. Usually encoded in the trnK tRNA gene intron. Probably assists in splicing its own and other chloroplast group II introns. The chain is Maturase K from Illicium oligandrum (Star anise).